Consider the following 217-residue polypeptide: Dual specificity phosphatase 29 (217 aa).

The Tyrosine-protein phosphatase domain occupies 46 to 194; that stretch reads HVNEVWPNLY…LRELDIKLAL (149 aa). 138-145 is a binding site for substrate; that stretch reads HCAMGRSR. The active-site Phosphocysteine intermediate is the cysteine 139.

The protein belongs to the protein-tyrosine phosphatase family. Non-receptor class dual specificity subfamily.

It is found in the cytoplasm. The protein localises to the nucleus. The enzyme catalyses O-phospho-L-tyrosyl-[protein] + H2O = L-tyrosyl-[protein] + phosphate. It catalyses the reaction O-phospho-L-seryl-[protein] + H2O = L-seryl-[protein] + phosphate. It carries out the reaction O-phospho-L-threonyl-[protein] + H2O = L-threonyl-[protein] + phosphate. Dual specificity phosphatase able to dephosphorylate phosphotyrosine, phosphoserine and phosphothreonine residues within the same substrate, with a preference for phosphotyrosine as a substrate. Involved in the modulation of AMPK and MAPK1/2 signaling pathways. The chain is Dual specificity phosphatase 29 (DUSP29) from Anolis carolinensis (Green anole).